Reading from the N-terminus, the 183-residue chain is Ferritin light chain 1 (183 aa).

Positions 7-156 constitute a Ferritin-like diiron domain; sequence QNYSTEVEAA…NHLTNLRRVA (150 aa). Fe cation contacts are provided by glutamate 54, glutamate 57, glutamate 58, glutamate 61, and glutamate 64.

It belongs to the ferritin family. Oligomer of 24 subunits. There are two types of subunits: L (light) chain and H (heavy) chain. The major chain can be light or heavy, depending on the species and tissue type. The functional molecule forms a roughly spherical shell with a diameter of 12 nm and contains a central cavity into which the insoluble mineral iron core is deposited. Interacts with NCOA4.

The protein resides in the cytoplasm. The protein localises to the cytoplasmic vesicle. It is found in the autophagosome. Its subcellular location is the autolysosome. Functionally, stores iron in a soluble, non-toxic, readily available form. Important for iron homeostasis. Iron is taken up in the ferrous form and deposited as ferric hydroxides after oxidation. Also plays a role in delivery of iron to cells. Mediates iron uptake in capsule cells of the developing kidney. Degraded to release iron upon autophagy activation by nutrient starvation. This Mus musculus (Mouse) protein is Ferritin light chain 1 (Ftl1).